Consider the following 466-residue polypeptide: Protein tilB homolog (466 aa).

LRR repeat units follow at residues 22–43, 45–66, 67–88, and 89–110; these read SLEE…DKWC, DLKI…SKLK, KLEY…EGCE, and ELAK…KTLK. Residues 123–161 form the LRRCT domain; it reads NPCAFFDHYREFVVATLPQLKWLDGKGIEPSERIKALQE. The stretch at 178–204 forms a coiled coil; sequence LKRAKLKEEAQRKHQEEDKNEDKRSNA. Composition is skewed to basic and acidic residues over residues 185 to 202 and 269 to 279; these read EEAQ…DKRS and EKQRKNQEKLS. Disordered regions lie at residues 185–206 and 269–288; these read EEAQ…NAGF and EKQR…VKPP. One can recognise a CS domain in the interval 301 to 396; sequence VNEPKIDFSL…GGQRAFTSVK (96 aa). A disordered region spans residues 418–466; it reads VDPSKHSFPDVTNIVQGKKHTPRRRPEPKIIPSEEDPTFEDNPEVPPLI. The segment covering 450-460 has biased composition (acidic residues); the sequence is SEEDPTFEDNP.

Belongs to the tilB family. In terms of assembly, interacts (via CS domain) with ZMYND10 (via C-terminus).

Its subcellular location is the cytoplasm. The protein localises to the cell projection. It localises to the cilium. May play a role in dynein arm assembly, hence essential for proper axoneme building for cilia motility. The sequence is that of Protein tilB homolog (LRCC6) from Macaca fascicularis (Crab-eating macaque).